A 326-amino-acid polypeptide reads, in one-letter code: MSVTPIVEVKHLEKEFGFWRKNRILKDVNFAIMPGEFHAFIGQNGAGKTTTIKCLISSYQRFKDEINIDGISNKNAKSKGVISYIPEYAVFPKHLNTHEYLYTLGKLSGCSLQTIKEKVDYWLARFQIEHLRFKKPNDFSSGQKKKVLLIQALFNDPKLLIMDEPTANLDPKTRNEFMDVCYELNVRNKMAVFVSSHILAELENYCDSLTVIHEGEILFNGKTKNIAKDNFGYRLKVNNSDSLRKWLKAQKIAYKYFPATDDFQVDLKQKQSNKFAVELYQQPDFEVFIFARQGNSLQNIYNNLIEQYEYDQVQRAVAIREQDEAV.

One can recognise an ABC transporter domain in the interval 7–239; that stretch reads VEVKHLEKEF…NFGYRLKVNN (233 aa). Position 42 to 49 (42 to 49) interacts with ATP; it reads GQNGAGKT.

The protein belongs to the ABC transporter superfamily.

This chain is Putative ABC transporter ATP-binding protein MPN_334, found in Mycoplasma pneumoniae (strain ATCC 29342 / M129 / Subtype 1) (Mycoplasmoides pneumoniae).